Consider the following 386-residue polypeptide: Succinyl-diaminopimelate desuccinylase (386 aa).

His-75 is a binding site for Zn(2+). The active site involves Asp-77. Asp-108 is a Zn(2+) binding site. Glu-138 acts as the Proton acceptor in catalysis. Positions 139, 167, and 356 each coordinate Zn(2+).

This sequence belongs to the peptidase M20A family. DapE subfamily. In terms of assembly, homodimer. Zn(2+) serves as cofactor. It depends on Co(2+) as a cofactor.

The enzyme catalyses N-succinyl-(2S,6S)-2,6-diaminopimelate + H2O = (2S,6S)-2,6-diaminopimelate + succinate. Its pathway is amino-acid biosynthesis; L-lysine biosynthesis via DAP pathway; LL-2,6-diaminopimelate from (S)-tetrahydrodipicolinate (succinylase route): step 3/3. Functionally, catalyzes the hydrolysis of N-succinyl-L,L-diaminopimelic acid (SDAP), forming succinate and LL-2,6-diaminopimelate (DAP), an intermediate involved in the bacterial biosynthesis of lysine and meso-diaminopimelic acid, an essential component of bacterial cell walls. This Caulobacter vibrioides (strain ATCC 19089 / CIP 103742 / CB 15) (Caulobacter crescentus) protein is Succinyl-diaminopimelate desuccinylase.